Reading from the N-terminus, the 60-residue chain is Large ribosomal subunit protein bL32 (60 aa).

Belongs to the bacterial ribosomal protein bL32 family.

The protein is Large ribosomal subunit protein bL32 of Oenococcus oeni (strain ATCC BAA-331 / PSU-1).